We begin with the raw amino-acid sequence, 1144 residues long: ATP-dependent helicase/deoxyribonuclease subunit B (1144 aa).

In terms of domain architecture, UvrD-like helicase ATP-binding spans 1 to 276; the sequence is MAIRYVFGRA…IDLDRNERPV (276 aa). 8 to 15 serves as a coordination point for ATP; the sequence is GRAGRGKS. A UvrD-like helicase C-terminal domain is found at 274 to 584; sequence RPVLPKVQEI…LVGSIERSKS (311 aa). 4 residues coordinate [4Fe-4S] cluster: C784, C1102, C1105, and C1111.

It belongs to the helicase family. AddB/RexB type 1 subfamily. Heterodimer of AddA and AddB. The cofactor is Mg(2+). Requires [4Fe-4S] cluster as cofactor.

In terms of biological role, the heterodimer acts as both an ATP-dependent DNA helicase and an ATP-dependent, dual-direction single-stranded exonuclease. Recognizes the chi site generating a DNA molecule suitable for the initiation of homologous recombination. The AddB subunit has 5' -&gt; 3' nuclease activity but not helicase activity. The chain is ATP-dependent helicase/deoxyribonuclease subunit B from Alkaliphilus oremlandii (strain OhILAs) (Clostridium oremlandii (strain OhILAs)).